We begin with the raw amino-acid sequence, 446 residues long: Phosphoglucosamine mutase (446 aa).

Ser-101 functions as the Phosphoserine intermediate in the catalytic mechanism. Ser-101, Asp-240, Asp-242, and Asp-244 together coordinate Mg(2+). The residue at position 101 (Ser-101) is a Phosphoserine.

The protein belongs to the phosphohexose mutase family. Requires Mg(2+) as cofactor. Activated by phosphorylation.

The catalysed reaction is alpha-D-glucosamine 1-phosphate = D-glucosamine 6-phosphate. Its function is as follows. Catalyzes the conversion of glucosamine-6-phosphate to glucosamine-1-phosphate. The polypeptide is Phosphoglucosamine mutase (Coxiella burnetii (strain Dugway 5J108-111)).